We begin with the raw amino-acid sequence, 502 residues long: Glycerol kinase (502 aa).

An ADP-binding site is contributed by T14. Positions 14, 15, and 16 each coordinate ATP. T14 contributes to the sn-glycerol 3-phosphate binding site. R18 contributes to the ADP binding site. R84, E85, and Y136 together coordinate sn-glycerol 3-phosphate. Glycerol-binding residues include R84, E85, and Y136. H232 carries the phosphohistidine; by HPr modification. D246 is a sn-glycerol 3-phosphate binding site. Glycerol contacts are provided by D246 and Q247. ADP contacts are provided by T268 and G311. Residues T268, G311, Q315, and G412 each coordinate ATP. G412 and N416 together coordinate ADP.

It belongs to the FGGY kinase family. As to quaternary structure, homotetramer and homodimer (in equilibrium). Post-translationally, the phosphoenolpyruvate-dependent sugar phosphotransferase system (PTS), including enzyme I, and histidine-containing protein (HPr) are required for the phosphorylation, which leads to the activation of the enzyme.

The enzyme catalyses glycerol + ATP = sn-glycerol 3-phosphate + ADP + H(+). Its pathway is polyol metabolism; glycerol degradation via glycerol kinase pathway; sn-glycerol 3-phosphate from glycerol: step 1/1. Activated by phosphorylation and inhibited by fructose 1,6-bisphosphate (FBP). Key enzyme in the regulation of glycerol uptake and metabolism. Catalyzes the phosphorylation of glycerol to yield sn-glycerol 3-phosphate. The sequence is that of Glycerol kinase from Streptococcus pneumoniae serotype 2 (strain D39 / NCTC 7466).